Here is a 549-residue protein sequence, read N- to C-terminus: Chaperonin GroEL (549 aa).

ATP contacts are provided by residues 30–33 (TLGP), Lys51, 87–91 (DGTTT), Gly415, and Asp495.

This sequence belongs to the chaperonin (HSP60) family. Forms a cylinder of 14 subunits composed of two heptameric rings stacked back-to-back. Interacts with the co-chaperonin GroES.

The protein resides in the cytoplasm. The catalysed reaction is ATP + H2O + a folded polypeptide = ADP + phosphate + an unfolded polypeptide.. Its function is as follows. Together with its co-chaperonin GroES, plays an essential role in assisting protein folding. The GroEL-GroES system forms a nano-cage that allows encapsulation of the non-native substrate proteins and provides a physical environment optimized to promote and accelerate protein folding. This is Chaperonin GroEL from Hahella chejuensis (strain KCTC 2396).